Consider the following 705-residue polypeptide: Ribosomal RNA large subunit methyltransferase K/L (705 aa).

One can recognise a THUMP domain in the interval 43-154 (VVYRCCLWSR…GEKGILGFDL (112 aa)).

This sequence belongs to the methyltransferase superfamily. RlmKL family.

It localises to the cytoplasm. The catalysed reaction is guanosine(2445) in 23S rRNA + S-adenosyl-L-methionine = N(2)-methylguanosine(2445) in 23S rRNA + S-adenosyl-L-homocysteine + H(+). It carries out the reaction guanosine(2069) in 23S rRNA + S-adenosyl-L-methionine = N(2)-methylguanosine(2069) in 23S rRNA + S-adenosyl-L-homocysteine + H(+). Functionally, specifically methylates the guanine in position 2445 (m2G2445) and the guanine in position 2069 (m7G2069) of 23S rRNA. The polypeptide is Ribosomal RNA large subunit methyltransferase K/L (Aliivibrio fischeri (strain ATCC 700601 / ES114) (Vibrio fischeri)).